A 348-amino-acid chain; its full sequence is Heat-inducible transcription repressor HrcA (348 aa).

The protein belongs to the HrcA family.

Functionally, negative regulator of class I heat shock genes (grpE-dnaK-dnaJ and groELS operons). Prevents heat-shock induction of these operons. This is Heat-inducible transcription repressor HrcA from Thermomicrobium roseum (strain ATCC 27502 / DSM 5159 / P-2).